The primary structure comprises 362 residues: Molybdenum import ATP-binding protein ModC (362 aa).

An ABC transporter domain is found at 4 to 238 (AGEAAIRARF…LDLPIRLGED (235 aa)). 38–45 (GHSGSGKT) contacts ATP. The 66-residue stretch at 297–362 (GTSILNTLPA…AQIKAVALVG (66 aa)) folds into the Mop domain.

This sequence belongs to the ABC transporter superfamily. Molybdate importer (TC 3.A.1.8) family. As to quaternary structure, the complex is composed of two ATP-binding proteins (ModC), two transmembrane proteins (ModB) and a solute-binding protein (ModA).

The protein resides in the cell inner membrane. It carries out the reaction molybdate(out) + ATP + H2O = molybdate(in) + ADP + phosphate + H(+). Its function is as follows. Part of the ABC transporter complex ModABC involved in molybdenum import. Responsible for energy coupling to the transport system. The protein is Molybdenum import ATP-binding protein ModC of Thiobacillus denitrificans (strain ATCC 25259 / T1).